A 197-amino-acid chain; its full sequence is CASP-like protein 1B1 (197 aa).

Residue Ala2 is modified to N-acetylalanine. The Cytoplasmic portion of the chain corresponds to 2–17 (AVSKLTLAATSGKSCK). The chain crosses the membrane as a helical span at residues 18 to 38 (ILLGLRLLAFSATLSAAIVMG). At 39-69 (LNKETKTFIVGKVGNTPIQATFTAKFDHTPA) the chain is on the extracellular side. The chain crosses the membrane as a helical span at residues 70–90 (FVFFVVANAMVSFHNLLMIAL). Residues 91–106 (QIFGGKMEFTGFRLLS) are Cytoplasmic-facing. The helical transmembrane segment at 107-127 (VAILDMLNVTLISAAANAAAF) threads the bilayer. At 128–156 (MAEVGKNGNKHARWDKICDRFATYCDHGA) the chain is on the extracellular side. A helical membrane pass occupies residues 157–177 (GALIAAFAGVILMLIISAASI). The Cytoplasmic portion of the chain corresponds to 178-197 (SRLVQPNKCCSTTASPSVVP).

This sequence belongs to the Casparian strip membrane proteins (CASP) family. As to quaternary structure, homodimer and heterodimers.

The protein localises to the cell membrane. The chain is CASP-like protein 1B1 from Arabidopsis thaliana (Mouse-ear cress).